A 697-amino-acid chain; its full sequence is Ion-translocating oxidoreductase complex subunit C (697 aa).

4Fe-4S ferredoxin-type domains follow at residues 366 to 397 (AEMGLSEPEQSCIRCGLCVDACPAGLLPQQLY) and 407 to 436 (KARNHNLFDCIECGACAYVCPSNIPLVQYY). Cys-377, Cys-380, Cys-383, Cys-387, Cys-416, Cys-419, Cys-422, and Cys-426 together coordinate [4Fe-4S] cluster. A disordered region spans residues 576–674 (AQLESEPVKS…APEEDPRKAA (99 aa)). Residues 581–596 (EPVKSESEAPEEDPRK) show a composition bias toward basic and acidic residues. The span at 597–615 (AAVAAAIARVKAKKAAQAQ) shows a compositional bias: low complexity. Residues 619–634 (EPVKSESEAPEEDPRK) are compositionally biased toward basic and acidic residues. The segment covering 635 to 653 (AAVAAAIARVKAKKAAQAQ) has biased composition (low complexity). Positions 657-672 (EPVKSESEAPEEDPRK) are enriched in basic and acidic residues.

The protein belongs to the 4Fe4S bacterial-type ferredoxin family. RnfC subfamily. As to quaternary structure, the complex is composed of six subunits: RnfA, RnfB, RnfC, RnfD, RnfE and RnfG. Requires [4Fe-4S] cluster as cofactor.

It localises to the cell inner membrane. In terms of biological role, part of a membrane-bound complex that couples electron transfer with translocation of ions across the membrane. This is Ion-translocating oxidoreductase complex subunit C from Yersinia enterocolitica serotype O:8 / biotype 1B (strain NCTC 13174 / 8081).